Reading from the N-terminus, the 201-residue chain is MSSSRQAEIKRKTNETDISIFINIDGNGISEIDTGIPFLDHMLHQISSHGLFDLKIRAIGDTHIDDHHTNEDVGIALGKAFTKALGERKGINRFGHFFAPLDEALVQVTLDCSGRPHLSYGLKLKAPRIGNYDTELVREFFIAFVNSSGITLHINQIEGRNSHHIVEACFKAFSRSMRMATEIDLRRSGTIPSSKGMLEID.

It belongs to the imidazoleglycerol-phosphate dehydratase family.

Its subcellular location is the cytoplasm. The enzyme catalyses D-erythro-1-(imidazol-4-yl)glycerol 3-phosphate = 3-(imidazol-4-yl)-2-oxopropyl phosphate + H2O. Its pathway is amino-acid biosynthesis; L-histidine biosynthesis; L-histidine from 5-phospho-alpha-D-ribose 1-diphosphate: step 6/9. This Prochlorococcus marinus (strain MIT 9515) protein is Imidazoleglycerol-phosphate dehydratase.